Reading from the N-terminus, the 174-residue chain is Guided entry of tail-anchored proteins factor 1 (174 aa).

The Lumenal segment spans residues 1–8; it reads MSSAAADH. Residues 9–29 traverse the membrane as a helical segment; sequence WAWLLVLSFVFGCNVLRVLLP. At 30–99 the chain is on the cytoplasmic side; it reads SFSSFMSRVL…VKARTAQLAK (70 aa). A coiled-coil region spans residues 39 to 94; it reads LQKDAEQESQMRAEIQDMKQELSTVNMMDEFARYARLERKINKMTDKLKTHVKART. The interval 39–97 is interaction with GET3/TRC40; it reads LQKDAEQESQMRAEIQDMKQELSTVNMMDEFARYARLERKINKMTDKLKTHVKARTAQL. A helical membrane pass occupies residues 100-120; sequence IKWVISVAFYVLQAALMISLI. The Lumenal segment spans residues 121 to 148; that stretch reads WKYYSVPVAVVPSKWITPLDRLVAFPTR. Residues 149 to 169 form a helical membrane-spanning segment; sequence VAGGVGITCWILVCNKVVAIV. Topologically, residues 170–174 are cytoplasmic; that stretch reads LHPFS.

The protein belongs to the WRB/GET1 family. Component of the Golgi to ER traffic (GET) complex, which is composed of GET1/WRB, CAMLG/GET2 and GET3. Within the complex, GET1 and CAMLG form a heterotetramer which is stabilized by phosphatidylinositol binding and which binds to the GET3 homodimer. Interacts with CAMLG (via C-terminus). GET3 shows a higher affinity for CAMLG than for GET1.

It is found in the endoplasmic reticulum membrane. In terms of biological role, required for the post-translational delivery of tail-anchored (TA) proteins to the endoplasmic reticulum. Together with CAMLG/GET2, acts as a membrane receptor for soluble GET3/TRC40, which recognizes and selectively binds the transmembrane domain of TA proteins in the cytosol. Required to ensure correct topology and ER insertion of CAMLG. This chain is Guided entry of tail-anchored proteins factor 1, found in Pongo abelii (Sumatran orangutan).